The following is a 375-amino-acid chain: DNA replication and repair protein RecF (375 aa).

30-37 provides a ligand contact to ATP; the sequence is GENAQGKT.

The protein belongs to the RecF family.

It is found in the cytoplasm. Its function is as follows. The RecF protein is involved in DNA metabolism; it is required for DNA replication and normal SOS inducibility. RecF binds preferentially to single-stranded, linear DNA. It also seems to bind ATP. The sequence is that of DNA replication and repair protein RecF from Bacillus anthracis (strain A0248).